The following is a 290-amino-acid chain: MSESEYKIADGSGKFLQAVKDGRRMKDAQWSKGRILLSNKRIVLAGSEGKRNLPLSEVQGLSGRHDVNQTVAKVGNYVSIRMTNESVMLVSLGDNTETFESKLYGALLDQTELQVKHPAVEGGVVTDEQFERARIKVDESELSVAMSNGSFVSVELDDVGSAEAASLEVNGDTKPVLKVEHTVNRDTSVQTYFATDSHTASILESLLTKEAEKSQGSVELSETEKRVLMALYSGVSSFEIPDFLGMDVDEVESIFERLIEVDVLEEVRKRREVTMKTRGRNIASEAINEE.

In terms of assembly, interacts with chemotaxis (Che) proteins as well as flagella accessory (Fla) proteins.

In terms of biological role, involved in taxis signal transduction. Essential for the ability to control the direction of flagellar rotation. May have a role between CheY and the flagellum. This chain is Taxis protein CheF1 (cheF1), found in Halobacterium salinarum (strain ATCC 29341 / DSM 671 / R1).